Here is a 424-residue protein sequence, read N- to C-terminus: Tyrosine--tRNA ligase (424 aa).

Tyr-33 contributes to the L-tyrosine binding site. The 'HIGH' region motif lies at Pro-38 to His-47. L-tyrosine-binding residues include Tyr-170 and Gln-174. The 'KMSKS' region motif lies at Lys-230 to Thr-234. Lys-233 contributes to the ATP binding site. Residues Met-357–Val-424 enclose the S4 RNA-binding domain.

This sequence belongs to the class-I aminoacyl-tRNA synthetase family. TyrS type 1 subfamily. In terms of assembly, homodimer.

It is found in the cytoplasm. The catalysed reaction is tRNA(Tyr) + L-tyrosine + ATP = L-tyrosyl-tRNA(Tyr) + AMP + diphosphate + H(+). Functionally, catalyzes the attachment of tyrosine to tRNA(Tyr) in a two-step reaction: tyrosine is first activated by ATP to form Tyr-AMP and then transferred to the acceptor end of tRNA(Tyr). This chain is Tyrosine--tRNA ligase, found in Roseiflexus castenholzii (strain DSM 13941 / HLO8).